The following is a 489-amino-acid chain: MELLKLLCLILFLTLSYVAFAIIVPPLNFPKNIPTIPFYVVFLPVIFPIDQTELYDLYIRESMEKYGAVKFFFGSRWNILVSRSEYLAQIFKDEDTFAKSGNQKKIPYSALAAYTGDNVISAYGAVWRNYRNAVTNGLQHFDDAPIFKNAKILCTLIKNRLLEGQTSIPMGPLSQRMALDNISQVALGFDFGALTHEKNAFHEHLIRIKKQIFHPFFLTFPFLDVLPIPSRKKAFKDVVSFRELLVKRVQDELVNNYKFEQTTFAASDLIRAHNNEIIDYKQLTDNIVIILVAGHENPQLLFNSSLYLLAKYSNEWQEKLRKEVNGITDPKGLADLPLLNAFLFEVVRMYPPLSTIINRCTTKTCKLGAEIVIPKGVYVGYNNFGTSHDPKTWGTTADDFKPERWGSDIETIRKNWRMAKNRCAVTGFHGGRRACLGEKLALTEMRISLAEMLKQFRWSLDPEWEEKLTPAGPLCPLNLKLKFNENIME.

Cysteine 435 is a binding site for heme.

This sequence belongs to the cytochrome P450 family. Heme serves as cofactor.

Involved in spore wall maturation. Thought to catalyze the oxidation of tyrosine residues in the formation of LL-dityrosine a precursor of the spore wall. This Saccharomyces cerevisiae (strain ATCC 204508 / S288c) (Baker's yeast) protein is Cytochrome P450-DIT2 (DIT2).